A 277-amino-acid chain; its full sequence is Large ribosomal subunit protein uL2 (277 aa).

Residues 226 to 277 form a disordered region; the sequence is NPIDHPHGGGEGRTSGGRHPVTPWGKPTKGKKTRSNKSTNKFILISRHKRKK.

Belongs to the universal ribosomal protein uL2 family. In terms of assembly, part of the 50S ribosomal subunit. Forms a bridge to the 30S subunit in the 70S ribosome.

Its function is as follows. One of the primary rRNA binding proteins. Required for association of the 30S and 50S subunits to form the 70S ribosome, for tRNA binding and peptide bond formation. It has been suggested to have peptidyltransferase activity; this is somewhat controversial. Makes several contacts with the 16S rRNA in the 70S ribosome. The polypeptide is Large ribosomal subunit protein uL2 (Rhodopseudomonas palustris (strain BisA53)).